Reading from the N-terminus, the 158-residue chain is MSLILDITDETGRVPEDRLAEIEKLLQFAAAEEGVADGAEVSVTIVNNEEIQKINKEYRGKDYPTDVISFALEEDGEGEVEIIGADMPPVLGDIIISVDKAREQAEEYGHSLMRELGFLTVHGFLHLLGYDHMTEEEEKEMFTKQKEILNRYGLSRSS.

The Zn(2+) site is built by H122, H126, and H132.

Belongs to the endoribonuclease YbeY family. The cofactor is Zn(2+).

The protein resides in the cytoplasm. In terms of biological role, single strand-specific metallo-endoribonuclease involved in late-stage 70S ribosome quality control and in maturation of the 3' terminus of the 16S rRNA. This Bacillus licheniformis (strain ATCC 14580 / DSM 13 / JCM 2505 / CCUG 7422 / NBRC 12200 / NCIMB 9375 / NCTC 10341 / NRRL NRS-1264 / Gibson 46) protein is Endoribonuclease YbeY.